We begin with the raw amino-acid sequence, 1435 residues long: Sterol 3-beta-glucosyltransferase (1435 aa).

4 disordered regions span residues 1-26 (MAPD…HQVA), 75-107 (SDEE…KFEG), 123-169 (RFSS…KDTP), and 185-206 (PSFE…RTSP). The segment covering 85–99 (TRQSSESHINRSSID) has biased composition (polar residues). Residues 123–133 (RFSSRSKSKSS) are compositionally biased toward low complexity. Polar residues predominate over residues 134 to 143 (NTIARGSRTP). Basic and acidic residues predominate over residues 189–206 (MPRKSKDPAEVDDERTSP). The GRAM 1 domain maps to 211 to 258 (ERLMEIFKFETPEDVLEEYPCWLMKSVLLQGYMYITTKHICFYAYLPK). The 99-residue stretch at 262 to 360 (EVVKSGYLSK…WVKALQKIIF (99 aa)) folds into the PH domain. Disordered regions lie at residues 444 to 477 (LSTA…PNAP), 527 to 594 (DLNR…QASA), 610 to 671 (QHSP…QAEI), and 727 to 759 (GKKH…ATPA). Over residues 527–537 (DLNRLTTEHHR) the composition is skewed to basic and acidic residues. 3 stretches are compositionally biased toward polar residues: residues 539-554 (NSAN…STNR), 628-647 (KSRS…TRTQ), and 657-671 (TTGS…QAEI). Residues 729-742 (KHYEEPHGIPRDNE) show a composition bias toward basic and acidic residues. The GRAM 2 domain maps to 760-826 (DRFRDHFALP…KDIENVDKEK (67 aa)). Residues Ser-949, Arg-950, Asp-952, Ala-1252, His-1254, His-1267, Gly-1271, Thr-1272, Asp-1291, and Gln-1292 each contribute to the UDP-alpha-D-glucose site.

This sequence belongs to the glycosyltransferase 28 family.

Its subcellular location is the cytoplasm. It is found in the preautophagosomal structure membrane. It carries out the reaction a sterol + UDP-alpha-D-glucose = a sterol 3-beta-D-glucoside + UDP + H(+). The catalysed reaction is ergosterol + UDP-alpha-D-glucose = ergosteryl 3-beta-D-glucoside + UDP + H(+). Its function is as follows. Sterol glycosyltransferase responsible for the glycosylation of ergosterol to form ergosterol-glucoside. The sequence is that of Sterol 3-beta-glucosyltransferase from Sclerotinia sclerotiorum (strain ATCC 18683 / 1980 / Ss-1) (White mold).